The primary structure comprises 386 residues: 5-hydroxytryptamine receptor 1B (386 aa).

The disordered stretch occupies residues 1–25; it reads MEEPGARCAPPPPAGSQTQTPSSNL. The Extracellular portion of the chain corresponds to 1-42; it reads MEEPGARCAPPPPAGSQTQTPSSNLSHNCSADSYIYQDSIAL. Residues 16–25 are compositionally biased toward polar residues; that stretch reads SQTQTPSSNL. Asn24 and Asn28 each carry an N-linked (GlcNAc...) asparagine glycan. A helical transmembrane segment spans residues 43 to 68; sequence PWKVLLVALLALITLATTLSNAFVIA. The Cytoplasmic portion of the chain corresponds to 69–82; sequence TVYRTRKLHTPANY. The helical transmembrane segment at 83–107 threads the bilayer; that stretch reads LIASLAVTDLLVSILVMPISTMYTV. At 108 to 115 the chain is on the extracellular side; the sequence is TGRWTLGQ. Residues 116 to 141 form a helical membrane-spanning segment; that stretch reads VVCDFWLSSDITCCTASIMHLCVIAL. Cys118 and Cys195 are joined by a disulfide. Positions 125 and 130 each coordinate ergotamine. The short motif at 142 to 144 is the DRY motif; important for ligand-induced conformation changes and signaling element; that stretch reads DRY. The Cytoplasmic segment spans residues 142–161; the sequence is DRYWAITDAVEYSAKRTPRR. A helical membrane pass occupies residues 162–180; the sequence is AAVMIALVWVFSISISLPR. At 181–201 the chain is on the extracellular side; that stretch reads FFWRQAKAEEEVLDCLVNTDH. Ergotamine is bound at residue Val197. Residues 202–225 form a helical membrane-spanning segment; the sequence is VLYTVYSTVGAFYLPTLLLIALYG. Topologically, residues 226 to 311 are cytoplasmic; sequence RIYVEARSRI…AARERKATKT (86 aa). The interval 253-272 is disordered; the sequence is ISDSPGSTSSVTSINSRVPD. The segment covering 254–268 has biased composition (low complexity); the sequence is SDSPGSTSSVTSINS. A helical transmembrane segment spans residues 312-333; it reads LGIILGAFIVCWLPFFIISLVM. Over 334–343 the chain is Extracellular; sequence PICKDACWFH. Residues 344 to 366 form a helical membrane-spanning segment; the sequence is MAIFDFFNWLGYLNSLINPIIYT. Positions 361–365 match the NPxxY motif; important for ligand-induced conformation changes and signaling motif; it reads NPIIY. Residues 367–386 are Cytoplasmic-facing; that stretch reads MPNEDFKQAFHKLIRFKCTG. A lipid anchor (S-palmitoyl cysteine) is attached at Cys384.

The protein belongs to the G-protein coupled receptor 1 family. In terms of assembly, homodimer. Heterodimer with HTR1D. Phosphorylated. Desensitization of the receptor may be mediated by its phosphorylation. In terms of processing, palmitoylated.

It localises to the cell membrane. Functionally, G-protein coupled receptor for 5-hydroxytryptamine (serotonin). Also functions as a receptor for ergot alkaloid derivatives, various anxiolytic and antidepressant drugs and other psychoactive substances, such as lysergic acid diethylamide (LSD). Ligand binding causes a conformation change that triggers signaling via guanine nucleotide-binding proteins (G proteins) and modulates the activity of downstream effectors, such as adenylate cyclase. HTR1B is coupled to G(i)/G(o) G alpha proteins and mediates inhibitory neurotransmission by inhibiting adenylate cyclase activity. Arrestin family members inhibit signaling via G proteins and mediate activation of alternative signaling pathways. Regulates the release of 5-hydroxytryptamine, dopamine and acetylcholine in the brain, and thereby affects neural activity, nociceptive processing, pain perception, mood and behavior. Besides, plays a role in vasoconstriction of cerebral arteries. This is 5-hydroxytryptamine receptor 1B (HTR1B) from Spalax ehrenbergi (Middle East blind mole rat).